The primary structure comprises 68 residues: uncharacterized protein (68 aa).

An N-terminal signal peptide occupies residues 1 to 21 (MELYREYPAWLIFLRRTYAVA).

This is an uncharacterized protein from Escherichia coli O157:H7.